The sequence spans 705 residues: Dolichyl-diphosphooligosaccharide--protein glycosyltransferase subunit STT3A (705 aa).

Over 1–15 (MTKLGFLRLSYEKQD) the chain is Cytoplasmic. The chain crosses the membrane as a helical span at residues 16–34 (TLLKLLILSMAAVLSFSTR). The Lumenal portion of the chain corresponds to 35–111 (LFAVLRFESV…VLHFFHITID (77 aa)). Residues 47–49 (EFD) carry the DXD motif 1 motif. A Mn(2+)-binding site is contributed by D49. A helical transmembrane segment spans residues 112-141 (IRNVCVFLAPLFSSFTTIVTYHLTKELKDA). Residue G142 is a topological domain, cytoplasmic. Residues 143–158 (AGLLAAAMIAVVPGYI) form a helical membrane-spanning segment. Topologically, residues 159 to 170 (SRSVAGSYDNEG) are lumenal. Mn(2+) is bound by residues D167 and E169. The short motif at 167–169 (DNE) is the DXD motif 2 element. Residues 171–188 (IAIFCMLLTYYMWIKAVK) traverse the membrane as a helical segment. Topologically, residues 189-191 (TGS) are cytoplasmic. The chain crosses the membrane as a helical span at residues 192–207 (IYWAAKCALAYFYMVS). The Lumenal segment spans residues 208–210 (SWG). The helical transmembrane segment at 211–229 (GYVFLINLIPLHVLVLMLT) threads the bilayer. At 230–234 (GRFSH) the chain is on the cytoplasmic side. A helical membrane pass occupies residues 235–253 (RIYVAYCTVYCLGTILSMQ). At 254 to 265 (ISFVGFQPVLSS) the chain is on the lumenal side. The chain crosses the membrane as a helical span at residues 266-283 (EHMAAFGVFGLCQIHAFV). At 284 to 298 (DYLRSKLNPQQFEVL) the chain is on the cytoplasmic side. The chain crosses the membrane as a helical span at residues 299 to 317 (FRSVISLVGFVLLTVGALL). Residues 318–356 (MLTGKISPWTGRFYSLLDPSYAKNNIPIIASVSEHQPTT) lie on the Lumenal side of the membrane. The short motif at 348 to 351 (SVSE) is the SVSE motif element. Residues 357–379 (WSSYYFDLQLLVFMFPVGLYYCF) form a helical membrane-spanning segment. Residues 380 to 385 (SNLSDA) are Cytoplasmic-facing. A helical membrane pass occupies residues 386–402 (RIFIIMYGVTSMYFSAV). Over 403 to 406 (MVRL) the chain is Lumenal. Position 405 (R405) interacts with dolichyl diphosphooligosaccharide. Residues 407-428 (MLVLAPVMCILSGIGVSQVLST) traverse the membrane as a helical segment. Residues 429–453 (YMKNLDISRPDKKSKKQQDSTYPIK) are Cytoplasmic-facing. A helical membrane pass occupies residues 454 to 473 (NEVASGMILVMAFFLITYTF). The Lumenal portion of the chain corresponds to 474–705 (HSTWVTSEAY…DLDNRGLSRT (232 aa)). The tract at residues 525–527 (WWD) is interacts with target acceptor peptide in protein substrate. Residues 525 to 529 (WWDYG) carry the WWDYG motif motif. Dolichyl diphosphooligosaccharide is bound at residue Y530. N-linked (GlcNAc...) asparagine glycosylation is found at N537 and N544. N-linked (GlcNAc...) (high mannose) asparagine glycosylation occurs at N548. Residues 592-599 (DINKFLWM) carry the DK motif motif.

The protein belongs to the STT3 family. Component of the oligosaccharyltransferase (OST) complex. There are 2 OST complexes, OST-A and OST-B, which contain STT3A or STT3B as catalytic subunit, respectively. OST-A and OST-B contain common core subunits RPN1, RPN2, OST48, OST4, DAD1 and TMEM258, and OST-A contains DC2/OSTC and KRTCAP2/KCP2 specific accessory subunits. OST-A complex assembly occurs through the formation of 3 subcomplexes. Subcomplex 1 contains RPN1 and TMEM258, subcomplex 2 contains the OST-A-specific subunits STT3A, DC2/OSTC, and KCP2 as well as the core subunit OST4, and subcomplex 3 contains RPN2, DAD1, and OST48. The OST-A complex can form stable complexes with the Sec61 complex or with both the Sec61 and TRAP complexes. Mg(2+) serves as cofactor. Mn(2+) is required as a cofactor.

It localises to the endoplasmic reticulum membrane. It catalyses the reaction a di-trans,poly-cis-dolichyl diphosphooligosaccharide + L-asparaginyl-[protein] = N(4)-(oligosaccharide-(1-&gt;4)-N-acetyl-beta-D-glucosaminyl-(1-&gt;4)-N-acetyl-beta-D-glucosaminyl)-L-asparaginyl-[protein] + a di-trans,poly-cis-dolichyl diphosphate + H(+). The protein operates within protein modification; protein glycosylation. Functionally, catalytic subunit of the oligosaccharyl transferase (OST) complex that catalyzes the initial transfer of a defined glycan (Glc(3)Man(9)GlcNAc(2) in eukaryotes) from the lipid carrier dolichol-pyrophosphate to an asparagine residue within an Asn-X-Ser/Thr consensus motif in nascent polypeptide chains, the first step in protein N-glycosylation. N-glycosylation occurs cotranslationally and the complex associates with the Sec61 complex at the channel-forming translocon complex that mediates protein translocation across the endoplasmic reticulum (ER). All subunits are required for a maximal enzyme activity. This subunit contains the active site and the acceptor peptide and donor lipid-linked oligosaccharide (LLO) binding pockets. STT3A is present in the majority of OST complexes and mediates cotranslational N-glycosylation of most sites on target proteins, while STT3B-containing complexes are required for efficient post-translational glycosylation and mediate glycosylation of sites that have been skipped by STT3A. STT3A-containing OST-A complex is also required to prevent hyperglycosylation of some target proteins by preventing glycosylation of facultative sites before folding of target proteins is completed. This Canis lupus familiaris (Dog) protein is Dolichyl-diphosphooligosaccharide--protein glycosyltransferase subunit STT3A.